A 340-amino-acid chain; its full sequence is S-adenosylmethionine:tRNA ribosyltransferase-isomerase (340 aa).

It belongs to the QueA family. As to quaternary structure, monomer.

It is found in the cytoplasm. The enzyme catalyses 7-aminomethyl-7-carbaguanosine(34) in tRNA + S-adenosyl-L-methionine = epoxyqueuosine(34) in tRNA + adenine + L-methionine + 2 H(+). It functions in the pathway tRNA modification; tRNA-queuosine biosynthesis. In terms of biological role, transfers and isomerizes the ribose moiety from AdoMet to the 7-aminomethyl group of 7-deazaguanine (preQ1-tRNA) to give epoxyqueuosine (oQ-tRNA). In Chromobacterium violaceum (strain ATCC 12472 / DSM 30191 / JCM 1249 / CCUG 213 / NBRC 12614 / NCIMB 9131 / NCTC 9757 / MK), this protein is S-adenosylmethionine:tRNA ribosyltransferase-isomerase.